A 254-amino-acid polypeptide reads, in one-letter code: Dihydroanticapsin 7-dehydrogenase (254 aa).

9 to 31 (LITGGASGIGYAAVQAFLNQQAN) serves as a coordination point for NAD(+). Residue Ser139 coordinates substrate. The active-site Proton acceptor is the Tyr152.

The protein belongs to the short-chain dehydrogenases/reductases (SDR) family.

It catalyses the reaction L-dihydroanticapsin + NAD(+) = L-anticapsin + NADH + H(+). It functions in the pathway antibiotic biosynthesis; bacilysin biosynthesis. In terms of biological role, part of the bacABCDEFG operon responsible for the biosynthesis of bacilysin, an irreversible inactivator of the glutaminase domain of glucosamine synthetase. Catalyzes the dehydrogenation of the C7-hydroxyl group in the 4S-tetrahydrotyrosine (4S-H4Tyr) to yield anticapsin (epoxycyclohexanonyl-Ala). The protein is Dihydroanticapsin 7-dehydrogenase of Bacillus amyloliquefaciens (Bacillus velezensis).